The following is a 121-amino-acid chain: Ribosome-binding factor A (121 aa).

The protein belongs to the RbfA family. In terms of assembly, monomer. Binds 30S ribosomal subunits, but not 50S ribosomal subunits or 70S ribosomes.

The protein localises to the cytoplasm. In terms of biological role, one of several proteins that assist in the late maturation steps of the functional core of the 30S ribosomal subunit. Associates with free 30S ribosomal subunits (but not with 30S subunits that are part of 70S ribosomes or polysomes). Required for efficient processing of 16S rRNA. May interact with the 5'-terminal helix region of 16S rRNA. This chain is Ribosome-binding factor A, found in Lactobacillus acidophilus (strain ATCC 700396 / NCK56 / N2 / NCFM).